Here is a 367-residue protein sequence, read N- to C-terminus: Alanine racemase (367 aa).

Residue Lys-35 is the Proton acceptor; specific for D-alanine of the active site. The residue at position 35 (Lys-35) is an N6-(pyridoxal phosphate)lysine. Position 130 (Arg-130) interacts with substrate. The Proton acceptor; specific for L-alanine role is filled by Tyr-258. Met-306 serves as a coordination point for substrate.

It belongs to the alanine racemase family. It depends on pyridoxal 5'-phosphate as a cofactor.

It carries out the reaction L-alanine = D-alanine. The protein operates within amino-acid biosynthesis; D-alanine biosynthesis; D-alanine from L-alanine: step 1/1. Catalyzes the interconversion of L-alanine and D-alanine. May also act on other amino acids. The polypeptide is Alanine racemase (alr) (Acinetobacter baumannii (strain SDF)).